The primary structure comprises 124 residues: Large ribosomal subunit protein bL12 (124 aa).

It belongs to the bacterial ribosomal protein bL12 family. Homodimer. Part of the ribosomal stalk of the 50S ribosomal subunit. Forms a multimeric L10(L12)X complex, where L10 forms an elongated spine to which 2 to 4 L12 dimers bind in a sequential fashion. Binds GTP-bound translation factors.

Functionally, forms part of the ribosomal stalk which helps the ribosome interact with GTP-bound translation factors. Is thus essential for accurate translation. The sequence is that of Large ribosomal subunit protein bL12 from Akkermansia muciniphila (strain ATCC BAA-835 / DSM 22959 / JCM 33894 / BCRC 81048 / CCUG 64013 / CIP 107961 / Muc).